A 629-amino-acid polypeptide reads, in one-letter code: Kelch-like protein 13 (629 aa).

The BTB domain occupies 66 to 135; it reads CDVTLVPGDG…IYTAKLSLNM (70 aa). A BACK domain is found at 170-271; the sequence is CVEVGRIANT…TPQDLINYVQ (102 aa). Kelch repeat units follow at residues 315–363, 364–415, 416–462, 464–509, 511–561, and 562–610; these read HLVT…VIGN, FLYV…ALKG, HLYA…VYGG, MYIS…TVGD, LYVI…VFEN, and KIYV…TLTV.

In terms of assembly, component of the BCR(KLHL9-KLHL13) E3 ubiquitin ligase complex, at least composed of CUL3, KLHL9, KLHL13 and RBX1. Interacts with AURKB.

The protein operates within protein modification; protein ubiquitination. Functionally, substrate-specific adapter of a BCR (BTB-CUL3-RBX1) E3 ubiquitin-protein ligase complex required for mitotic progression and cytokinesis. The BCR(KLHL9-KLHL13) E3 ubiquitin ligase complex mediates the ubiquitination of AURKB and controls the dynamic behavior of AURKB on mitotic chromosomes and thereby coordinates faithful mitotic progression and completion of cytokinesis. The sequence is that of Kelch-like protein 13 (KLHL13) from Gallus gallus (Chicken).